The chain runs to 306 residues: Non-specific ribonucleoside hydrolase RihC (306 aa).

Histidine 235 is a catalytic residue.

The protein belongs to the IUNH family. RihC subfamily.

Its function is as follows. Hydrolyzes both purine and pyrimidine ribonucleosides with a broad-substrate specificity. The sequence is that of Non-specific ribonucleoside hydrolase RihC from Salmonella enteritidis PT4 (strain P125109).